The primary structure comprises 100 residues: Large ribosomal subunit protein uL23 (100 aa).

It belongs to the universal ribosomal protein uL23 family. In terms of assembly, part of the 50S ribosomal subunit. Contacts protein L29, and trigger factor when it is bound to the ribosome.

One of the early assembly proteins it binds 23S rRNA. One of the proteins that surrounds the polypeptide exit tunnel on the outside of the ribosome. Forms the main docking site for trigger factor binding to the ribosome. The protein is Large ribosomal subunit protein uL23 of Thermotoga maritima (strain ATCC 43589 / DSM 3109 / JCM 10099 / NBRC 100826 / MSB8).